Reading from the N-terminus, the 95-residue chain is Aspartyl/glutamyl-tRNA(Asn/Gln) amidotransferase subunit C (95 aa).

The protein belongs to the GatC family. As to quaternary structure, heterotrimer of A, B and C subunits.

The enzyme catalyses L-glutamyl-tRNA(Gln) + L-glutamine + ATP + H2O = L-glutaminyl-tRNA(Gln) + L-glutamate + ADP + phosphate + H(+). It catalyses the reaction L-aspartyl-tRNA(Asn) + L-glutamine + ATP + H2O = L-asparaginyl-tRNA(Asn) + L-glutamate + ADP + phosphate + 2 H(+). Its function is as follows. Allows the formation of correctly charged Asn-tRNA(Asn) or Gln-tRNA(Gln) through the transamidation of misacylated Asp-tRNA(Asn) or Glu-tRNA(Gln) in organisms which lack either or both of asparaginyl-tRNA or glutaminyl-tRNA synthetases. The reaction takes place in the presence of glutamine and ATP through an activated phospho-Asp-tRNA(Asn) or phospho-Glu-tRNA(Gln). This is Aspartyl/glutamyl-tRNA(Asn/Gln) amidotransferase subunit C from Rhizobium leguminosarum bv. trifolii (strain WSM2304).